We begin with the raw amino-acid sequence, 337 residues long: MASRAGSARRAPENEATIQYVQCDGLAVMKIVKHCHEESCSNMEVAQGALLGLVVENRLEITNCFPFPKHDDTMDEEEYQLDMMRRLRRVNVDHFHVGWYQSADVGNFLSLSLLESQYHYQTSIEESVVVIYDTKKSARGFLTLKAYRLTPQAIAMYKEGDYTPEALRNLKIGYENLFIEVPIVIRNSPLTNIMISELTEMIPEEEGSKFLDLGTASVLEGQLRSLMERVDELNQEAIKFNRYQQLVVRQQQDKHRWMVKRAQENAARAAKDETPLPEEDVNKLFKPHPVPPRLNPMIVAGQIDTYSQHISQFCSQSLAKLYLTQALQNAKEAKQNN.

An MPN domain is found at 21 to 153; that stretch reads VQCDGLAVMK…LKAYRLTPQA (133 aa).

This sequence belongs to the eIF-3 subunit H family. In terms of assembly, component of the eukaryotic translation initiation factor 3 (eIF-3) complex.

It is found in the cytoplasm. Its function is as follows. Component of the eukaryotic translation initiation factor 3 (eIF-3) complex, which is involved in protein synthesis of a specialized repertoire of mRNAs and, together with other initiation factors, stimulates binding of mRNA and methionyl-tRNAi to the 40S ribosome. The eIF-3 complex specifically targets and initiates translation of a subset of mRNAs involved in cell proliferation. This is Eukaryotic translation initiation factor 3 subunit H from Bombyx mori (Silk moth).